Here is a 425-residue protein sequence, read N- to C-terminus: Fe(2+) transport protein 3, chloroplastic (425 aa).

Residues 65–85 (FVAIASILLAGAAGVTIPLIG) form a helical membrane-spanning segment. The Cytoplasmic segment spans residues 86 to 97 (RNRRFLQTDGNL). A helical transmembrane segment spans residues 98–118 (FVTAKAFAAGVILATGFVHML). Residues 119-137 (AGGTEALKNPCLPDFPWSK) are Lumenal-facing. Residues 138–158 (FPFPGFFAMIAALITLFVDFM) form a helical membrane-spanning segment. Over 159 to 269 (GTQYYERKQE…GLDAVNGARH (111 aa)) the chain is Cytoplasmic. The helical transmembrane segment at 270–290 (IVVSQVLELGIVSHSIIIGLS) threads the bilayer. Topologically, residues 291–301 (LGVSQSPCTIR) are lumenal. Residues 302 to 322 (PLIAALSFHQFFEGFALGGCI) traverse the membrane as a helical segment. At 323–333 (SQAQFRNKSAT) the chain is on the cytoplasmic side. Residues 334-354 (IMACFFALTTPIGIGIGTAVA) traverse the membrane as a helical segment. Topologically, residues 355-369 (SSFNSHSVGALVTEG) are lumenal. A helical membrane pass occupies residues 370–390 (ILDSLSAGILVYMALVDLIAA). Over 391–404 (DFLSTKMRCNFRLQ) the chain is Cytoplasmic. Residues 405-425 (IVSYVMLFLGAGLMSSLAIWA) form a helical membrane-spanning segment.

It belongs to the ZIP transporter (TC 2.A.5) family.

It is found in the plastid. It localises to the chloroplast thylakoid membrane. May play a role in the transport of iron in the plastids. The chain is Fe(2+) transport protein 3, chloroplastic (IRT3) from Arabidopsis thaliana (Mouse-ear cress).